Consider the following 367-residue polypeptide: MKNVGFIGWRGMVGSVLMQRMVEERDFDAIRPVFFSTSQLGQAAPSFGGTTGTLQDAFDLEALKALDIIVTCQGGDYTNEIYPKLRESGWQGYWIDAASSLRMKDDAIIILDPVNQDVITDGLNNGIRTFVGGNCTVSLMLMSLGGLFANDLVDWVSVATYQAASGGGARHMRELLTQMGHLYGHVADELANPSSAILDIERKVTTLTRSGELPVDNFGVPLAGSLIPWIDKQLDNGQSREEWKGQAETNKILNTSSVIPVDGLCVRVGALRCHSQAFTIKLKKDVSIPTVEELLAAHNPWAKVVPNDREITMRELTPAAVTGTLTTPVGRLRKLNMGPEFLSAFTVGDQLLWGAAEPLRRMLRQLA.

NADP(+) is bound by residues 10–13 (RGMV), 37–38 (TS), and glutamine 73. Arginine 102 lines the phosphate pocket. Cysteine 135 functions as the Acyl-thioester intermediate in the catalytic mechanism. Cysteine 135 is subject to S-cysteinyl cysteine; in inhibited form. Glutamine 162 contacts substrate. NADP(+) is bound by residues 165–166 (SG) and proline 193. Glutamate 241 provides a ligand contact to substrate. A phosphate-binding site is contributed by lysine 244. Position 267 (arginine 267) interacts with substrate. Catalysis depends on histidine 274, which acts as the Proton acceptor. Glutamine 350 is a binding site for NADP(+).

The protein belongs to the aspartate-semialdehyde dehydrogenase family. As to quaternary structure, homodimer.

The enzyme catalyses L-aspartate 4-semialdehyde + phosphate + NADP(+) = 4-phospho-L-aspartate + NADPH + H(+). It participates in amino-acid biosynthesis; L-lysine biosynthesis via DAP pathway; (S)-tetrahydrodipicolinate from L-aspartate: step 2/4. Its pathway is amino-acid biosynthesis; L-methionine biosynthesis via de novo pathway; L-homoserine from L-aspartate: step 2/3. The protein operates within amino-acid biosynthesis; L-threonine biosynthesis; L-threonine from L-aspartate: step 2/5. Functionally, catalyzes the NADPH-dependent formation of L-aspartate-semialdehyde (L-ASA) by the reductive dephosphorylation of L-aspartyl-4-phosphate. This is Aspartate-semialdehyde dehydrogenase from Escherichia coli O6:H1 (strain CFT073 / ATCC 700928 / UPEC).